The chain runs to 620 residues: Extensin (620 aa).

The N-terminal stretch at 1–20 (MKLSTLFALVLLLQSTAILS) is a signal peptide. Residues 34–45 (LPPPVTSQPPPS) are compositionally biased toward pro residues. The disordered stretch occupies residues 34–620 (LPPPVTSQPP…PPYGLLLSTP (587 aa)). The H-A-P-P repeat unit spans residues 70-73 (HAPP). Residues 106–129 (NPPPSPVISPSHPPPSYGAPPPSH) show a composition bias toward pro residues. Over residues 145-163 (SHGHAPPSGGHTPPRGQHP) the composition is skewed to low complexity. The H-A-P-P repeat unit spans residues 148–151 (HAPP). Residues 164 to 177 (PSHRRPSPPSRHGH) are compositionally biased toward basic residues. A compositionally biased stretch (pro residues) spans 178 to 219 (PPPPTYAQPPPTPIYSPSPQVQPPPTYSPPPPTHVQPTPSPP). Residues 205 to 620 (SPPPPTHVQP…PPYGLLLSTP (416 aa)) are contains the Ser-Pro(4) repeats. A run of 2 repeats spans residues 229–235 (THRHAPP) and 236–242 (THRHAPP). Residues 229-241 (THRHAPPTHRHAP) show a composition bias toward basic residues. The tract at residues 229–242 (THRHAPPTHRHAPP) is 2 X 7 AA tandem repeats of T-H-R-H-A-P-P. Pro residues-rich tracts occupy residues 251–552 (HLPP…PPHW) and 562–613 (GQPP…PPPY). The segment at 499-600 (PPTFSPPPPR…PTPTYGQPPS (102 aa)) is 3 X approximate tandem repeats.

In terms of processing, hydroxylated on proline residues in the S-P-P-P-P repeat. Post-translationally, O-glycosylated on hydroxyprolines. Expressed in the tip of the emerging lateral roots.

It is found in the secreted. It localises to the primary cell wall. Its function is as follows. Has a specialized structural function, possibly in the mechanical penetration of the cortex and epidermis of the main root. In Nicotiana tabacum (Common tobacco), this protein is Extensin (HRGPNT3).